The following is a 119-amino-acid chain: Large ribosomal subunit protein uL18 (119 aa).

Belongs to the universal ribosomal protein uL18 family. Part of the 50S ribosomal subunit; part of the 5S rRNA/L5/L18/L25 subcomplex. Contacts the 5S and 23S rRNAs.

This is one of the proteins that bind and probably mediate the attachment of the 5S RNA into the large ribosomal subunit, where it forms part of the central protuberance. This chain is Large ribosomal subunit protein uL18, found in Xanthomonas oryzae pv. oryzae (strain MAFF 311018).